Here is a 448-residue protein sequence, read N- to C-terminus: Phosphohexose mutases (448 aa).

S97 serves as the catalytic Phosphoserine intermediate. Mg(2+)-binding residues include S97, D237, D239, and D241.

Belongs to the phosphohexose mutase family. Requires Mg(2+) as cofactor.

It catalyses the reaction alpha-D-glucose 1-phosphate = alpha-D-glucose 6-phosphate. The enzyme catalyses alpha-D-mannose 1-phosphate = D-mannose 6-phosphate. The protein operates within nucleotide-sugar biosynthesis; GDP-alpha-D-mannose biosynthesis; alpha-D-mannose 1-phosphate from D-fructose 6-phosphate: step 2/2. Its function is as follows. Involved in xanthan production. In Xanthomonas campestris pv. campestris (strain ATCC 33913 / DSM 3586 / NCPPB 528 / LMG 568 / P 25), this protein is Phosphohexose mutases (xanA).